A 787-amino-acid chain; its full sequence is ATP-dependent zinc metalloprotease FtsH (787 aa).

Residues 1 to 5 (MNRKN) lie on the Cytoplasmic side of the membrane. A helical membrane pass occupies residues 6–26 (VIRMVTAIAVVVLLGWSFFYF). The Extracellular segment spans residues 27–110 (SDDTRGYKFV…KVTTAVNEGS (84 aa)). A helical membrane pass occupies residues 111–131 (ILGELLVYVLPLLLLVGLFVM). Over 132–787 (FSRMQGGARM…VSPSNPPAHG (656 aa)) the chain is Cytoplasmic. 203 to 210 (GPPGTGKT) contributes to the ATP binding site. Histidine 425 serves as a coordination point for Zn(2+). Glutamate 426 is an active-site residue. 2 residues coordinate Zn(2+): histidine 429 and aspartate 501. Residues 616–787 (DFGGRIPSDK…VSPSNPPAHG (172 aa)) are disordered. Low complexity-rich tracts occupy residues 650 to 671 (AFKAAIARASQAAEASHQAAQS) and 700 to 709 (YGAPPGWHAP). The segment covering 710–720 (GWPPQQPPDYW) has biased composition (pro residues). Residues 721 to 732 (YPPEQQPSQSPY) are compositionally biased toward low complexity. Positions 733-762 (WPQPAPSYPGQAPPPYPSYPPCPSYPPPGQ) are enriched in pro residues.

It in the central section; belongs to the AAA ATPase family. In the C-terminal section; belongs to the peptidase M41 family. Homohexamer. Requires Zn(2+) as cofactor.

It is found in the cell membrane. In terms of biological role, acts as a processive, ATP-dependent zinc metallopeptidase for both cytoplasmic and membrane proteins. Plays a role in the quality control of integral membrane proteins. This is ATP-dependent zinc metalloprotease FtsH from Mycobacterium leprae (strain TN).